We begin with the raw amino-acid sequence, 389 residues long: Nicotinate phosphoribosyltransferase (389 aa).

His-216 is subject to Phosphohistidine; by autocatalysis.

Belongs to the NAPRTase family. Post-translationally, transiently phosphorylated on a His residue during the reaction cycle. Phosphorylation strongly increases the affinity for substrates and increases the rate of nicotinate D-ribonucleotide production. Dephosphorylation regenerates the low-affinity form of the enzyme, leading to product release.

It carries out the reaction nicotinate + 5-phospho-alpha-D-ribose 1-diphosphate + ATP + H2O = nicotinate beta-D-ribonucleotide + ADP + phosphate + diphosphate. It participates in cofactor biosynthesis; NAD(+) biosynthesis; nicotinate D-ribonucleotide from nicotinate: step 1/1. Its function is as follows. Catalyzes the synthesis of beta-nicotinate D-ribonucleotide from nicotinate and 5-phospho-D-ribose 1-phosphate at the expense of ATP. This is Nicotinate phosphoribosyltransferase from Ralstonia pickettii (strain 12J).